The following is a 232-amino-acid chain: Phosphate-specific transport system accessory protein PhoU homolog 1 (232 aa).

This sequence belongs to the PhoU family. Homodimer.

The protein localises to the cytoplasm. Its function is as follows. Plays a role in the regulation of phosphate uptake. The sequence is that of Phosphate-specific transport system accessory protein PhoU homolog 1 (phoU1) from Thermotoga maritima (strain ATCC 43589 / DSM 3109 / JCM 10099 / NBRC 100826 / MSB8).